The sequence spans 184 residues: Peptide deformylase 2 (184 aa).

Residues cysteine 110 and histidine 153 each contribute to the Fe cation site. The active site involves glutamate 154. Histidine 157 contributes to the Fe cation binding site.

This sequence belongs to the polypeptide deformylase family. Fe(2+) serves as cofactor.

The catalysed reaction is N-terminal N-formyl-L-methionyl-[peptide] + H2O = N-terminal L-methionyl-[peptide] + formate. Removes the formyl group from the N-terminal Met of newly synthesized proteins. Requires at least a dipeptide for an efficient rate of reaction. N-terminal L-methionine is a prerequisite for activity but the enzyme has broad specificity at other positions. This Bacillus cereus (strain ATCC 14579 / DSM 31 / CCUG 7414 / JCM 2152 / NBRC 15305 / NCIMB 9373 / NCTC 2599 / NRRL B-3711) protein is Peptide deformylase 2.